The chain runs to 273 residues: NADPH-dependent 7-cyano-7-deazaguanine reductase (273 aa).

81–83 serves as a coordination point for substrate; sequence VES. Position 83 to 84 (83 to 84) interacts with NADPH; it reads SK. C179 functions as the Thioimide intermediate in the catalytic mechanism. D186 acts as the Proton donor in catalysis. Residue 218-219 coordinates substrate; sequence AE. 247-248 lines the NADPH pocket; that stretch reads RG.

Belongs to the GTP cyclohydrolase I family. QueF type 2 subfamily. As to quaternary structure, homodimer.

The protein localises to the cytoplasm. The catalysed reaction is 7-aminomethyl-7-carbaguanine + 2 NADP(+) = 7-cyano-7-deazaguanine + 2 NADPH + 3 H(+). It functions in the pathway tRNA modification; tRNA-queuosine biosynthesis. Catalyzes the NADPH-dependent reduction of 7-cyano-7-deazaguanine (preQ0) to 7-aminomethyl-7-deazaguanine (preQ1). In Rickettsia felis (strain ATCC VR-1525 / URRWXCal2) (Rickettsia azadi), this protein is NADPH-dependent 7-cyano-7-deazaguanine reductase.